A 178-amino-acid chain; its full sequence is CRISPR system ring nuclease SSO2081 (178 aa).

The interval 105-106 (RK) is transition state stabilizer.

It belongs to the cOA ring nuclease family. As to quaternary structure, homodimer. It depends on Does not require a metal cofactor. as a cofactor.

It is found in the cytoplasm. The catalysed reaction is cyclic tetraadenylate = 2 5'-hydroxy-diadenylate 2',3'-cylic phosphate. In terms of biological role, CRISPR (clustered regularly interspaced short palindromic repeat) is an adaptive immune system that provides protection against mobile genetic elements (viruses, transposable elements and conjugative plasmids). CRISPR clusters contain spacers, sequences complementary to antecedent mobile elements, and target invading nucleic acids. CRISPR clusters are transcribed and processed into CRISPR RNA (crRNA). A nuclease that degrades cyclic oligoadenylates (cOA), second messengers that induce an antiviral state important for defense against invading nucleic acids. Destruction of cOA deactivates the Csx1 ribonuclease, preventing uncontrolled degradation of cellular RNA. Degrades cA4 (a tetraadenylate ring) into a linear diadenylate product with 5'-OH and 2',3'-cyclic phosphate termini. Is 10-fold more active than SSO1393, suggesting this is the major cA4 degradation enzyme. Is highly specific for cA4; it has very poor activity on cA6 and no discernible activity against a number of cyclic dinucleotides. There may be 2 active sites per homodimer. The polypeptide is CRISPR system ring nuclease SSO2081 (Saccharolobus solfataricus (strain ATCC 35092 / DSM 1617 / JCM 11322 / P2) (Sulfolobus solfataricus)).